A 102-amino-acid polypeptide reads, in one-letter code: NADH-quinone oxidoreductase subunit K (102 aa).

The next 3 helical transmembrane spans lie at 6–26 (LEHG…GLMV), 30–50 (ILFV…AFVV), and 62–82 (VMFI…LAIL).

Belongs to the complex I subunit 4L family. As to quaternary structure, NDH-1 is composed of 13 different subunits. Subunits NuoA, H, J, K, L, M, N constitute the membrane sector of the complex.

It is found in the cell inner membrane. It catalyses the reaction a quinone + NADH + 5 H(+)(in) = a quinol + NAD(+) + 4 H(+)(out). In terms of biological role, NDH-1 shuttles electrons from NADH, via FMN and iron-sulfur (Fe-S) centers, to quinones in the respiratory chain. The immediate electron acceptor for the enzyme in this species is believed to be ubiquinone. Couples the redox reaction to proton translocation (for every two electrons transferred, four hydrogen ions are translocated across the cytoplasmic membrane), and thus conserves the redox energy in a proton gradient. The polypeptide is NADH-quinone oxidoreductase subunit K (Pseudomonas syringae pv. tomato (strain ATCC BAA-871 / DC3000)).